A 471-amino-acid polypeptide reads, in one-letter code: 1,3-beta-glucanosyltransferase GAS4 (471 aa).

The N-terminal stretch at Met1–Ala21 is a signal peptide. Cys70 and Cys99 are joined by a disulfide. Tyr88 lines the (1,3-beta-D-glucosyl)n pocket. An N-linked (GlcNAc...) asparagine glycan is attached at Asn151. (1,3-beta-D-glucosyl)n is bound by residues Asn160, Glu161, Asp203, and Arg208. The active-site Proton donor is Glu161. 2 disulfides stabilise this stretch: Cys217–Cys354 and Cys238–Cys269. The active-site Nucleophile is Glu266. Tyr298 serves as a coordination point for (1,3-beta-D-glucosyl)n. Asn398 carries an N-linked (GlcNAc...) asparagine glycan. Asn447 is lipidated: GPI-anchor amidated asparagine. Positions Ser448–Phe471 are cleaved as a propeptide — removed in mature form.

Belongs to the glycosyl hydrolase 72 family.

The protein resides in the cell membrane. Splits internally a 1,3-beta-glucan molecule and transfers the newly generated reducing end (the donor) to the non-reducing end of another 1,3-beta-glucan molecule (the acceptor) forming a 1,3-beta linkage, resulting in the elongation of 1,3-beta-glucan chains in the cell wall. Involved in spore wall assembly. In Saccharomyces cerevisiae (strain ATCC 204508 / S288c) (Baker's yeast), this protein is 1,3-beta-glucanosyltransferase GAS4 (GAS4).